Reading from the N-terminus, the 275-residue chain is Elongation factor Ts (275 aa).

The involved in Mg(2+) ion dislocation from EF-Tu stretch occupies residues 80 to 83 (TDFV).

It belongs to the EF-Ts family.

It localises to the cytoplasm. Functionally, associates with the EF-Tu.GDP complex and induces the exchange of GDP to GTP. It remains bound to the aminoacyl-tRNA.EF-Tu.GTP complex up to the GTP hydrolysis stage on the ribosome. In Clavibacter michiganensis subsp. michiganensis (strain NCPPB 382), this protein is Elongation factor Ts.